The chain runs to 404 residues: Cysteine desulfurase IscS (404 aa).

Pyridoxal 5'-phosphate is bound by residues 75–76, N155, Q183, and 203–205; these read AT and SGH. K206 is subject to N6-(pyridoxal phosphate)lysine. Residue T243 participates in pyridoxal 5'-phosphate binding. C328 (cysteine persulfide intermediate) is an active-site residue. C328 provides a ligand contact to [2Fe-2S] cluster.

It belongs to the class-V pyridoxal-phosphate-dependent aminotransferase family. NifS/IscS subfamily. As to quaternary structure, homodimer. Forms a heterotetramer with IscU, interacts with other sulfur acceptors. The cofactor is pyridoxal 5'-phosphate.

The protein localises to the cytoplasm. It catalyses the reaction (sulfur carrier)-H + L-cysteine = (sulfur carrier)-SH + L-alanine. It participates in cofactor biosynthesis; iron-sulfur cluster biosynthesis. In terms of biological role, master enzyme that delivers sulfur to a number of partners involved in Fe-S cluster assembly, tRNA modification or cofactor biosynthesis. Catalyzes the removal of elemental sulfur atoms from cysteine to produce alanine. Functions as a sulfur delivery protein for Fe-S cluster synthesis onto IscU, an Fe-S scaffold assembly protein, as well as other S acceptor proteins. In Shewanella oneidensis (strain ATCC 700550 / JCM 31522 / CIP 106686 / LMG 19005 / NCIMB 14063 / MR-1), this protein is Cysteine desulfurase IscS.